We begin with the raw amino-acid sequence, 603 residues long: Bud site selection protein 8 (603 aa).

Residues 1 to 10 (MIQSDEDNLD) show a composition bias toward acidic residues. Disordered regions lie at residues 1–25 (MIQS…GTSS), 83–150 (ASTS…SPSS), and 190–212 (ANRG…EPNE). Residues 1–515 (MIQSDEDNLD…GFRDVYSIEN (515 aa)) lie on the Extracellular side of the membrane. 2 stretches are compositionally biased toward low complexity: residues 11–25 (SSET…GTSS) and 84–95 (STSSSSSSNSSS). Asparagine 92, asparagine 110, asparagine 211, asparagine 240, asparagine 271, and asparagine 333 each carry an N-linked (GlcNAc...) asparagine glycan. Positions 96–115 (ITQFHDTQDNNIPSNTTVRP) are enriched in polar residues. The tract at residues 286–479 (AGSIKSSTSD…NRKEDRHDAE (194 aa)) is disordered. Positions 325–335 (PSHNSDSSNES) are enriched in low complexity. Positions 336-350 (SPKDHIGHNNEEKFS) are enriched in basic and acidic residues. 2 N-linked (GlcNAc...) asparagine glycosylation sites follow: asparagine 396 and asparagine 423. The segment covering 439–452 (KSQSSESDTGQNSI) has biased composition (polar residues). Over residues 463 to 479 (KQQEKTDNRKEDRHDAE) the composition is skewed to basic and acidic residues. A helical transmembrane segment spans residues 516-536 (IIVILLCCSIVPPLFFIIGCS). Topologically, residues 537–577 (SRRKLVSDYRLMRLLMNKEHRAALLQGFIWDVDLRWFRMFC) are cytoplasmic. Residues 578-598 (LILGAAETVIVMAGIAIGFGV) form a helical membrane-spanning segment. The Extracellular segment spans residues 599 to 603 (GITRE).

This sequence belongs to the BUD8/9 family. In terms of assembly, interacts with RAX1 RAX2 at the proximal or distal pole in unbudded cells. Post-translationally, N- and O-glycosylated.

The protein localises to the cell membrane. Its subcellular location is the bud tip. Its function is as follows. Involved in positioning the distal bud pole signal. This chain is Bud site selection protein 8, found in Saccharomyces cerevisiae (strain ATCC 204508 / S288c) (Baker's yeast).